A 95-amino-acid chain; its full sequence is UPF0358 protein GK1077 (95 aa).

It belongs to the UPF0358 family.

The polypeptide is UPF0358 protein GK1077 (Geobacillus kaustophilus (strain HTA426)).